The chain runs to 54 residues: Ovomucoid (54 aa).

The region spanning 4 to 54 (VDCSDYPKPACTVEYMPLCGSDNKTYDNKCNFCNAVVDSNGTLTLSHFGKC) is the Kazal-like domain. 3 cysteine pairs are disulfide-bonded: cysteine 6/cysteine 36, cysteine 14/cysteine 33, and cysteine 22/cysteine 54. An N-linked (GlcNAc...) asparagine glycan is attached at asparagine 43.

It is found in the secreted. In Anser anser anser (Western greylag goose), this protein is Ovomucoid.